Reading from the N-terminus, the 356-residue chain is DNA polymerase IV (356 aa).

In terms of domain architecture, UmuC spans Ile7 to Gly188. Residues Asp11 and Asp106 each coordinate Mg(2+). The active site involves Glu107.

This sequence belongs to the DNA polymerase type-Y family. As to quaternary structure, monomer. Mg(2+) is required as a cofactor.

The protein localises to the cytoplasm. It carries out the reaction DNA(n) + a 2'-deoxyribonucleoside 5'-triphosphate = DNA(n+1) + diphosphate. In terms of biological role, poorly processive, error-prone DNA polymerase involved in untargeted mutagenesis. Copies undamaged DNA at stalled replication forks, which arise in vivo from mismatched or misaligned primer ends. These misaligned primers can be extended by PolIV. Exhibits no 3'-5' exonuclease (proofreading) activity. May be involved in translesional synthesis, in conjunction with the beta clamp from PolIII. In Listeria monocytogenes serotype 4b (strain CLIP80459), this protein is DNA polymerase IV.